A 657-amino-acid polypeptide reads, in one-letter code: Broad substrate specificity ATP-binding cassette transporter ABCG2 (657 aa).

The disordered stretch occupies residues 1-25 (MSSSNDHVLVPMSQRNKNGLPGMSS). Topologically, residues 1–395 (MSSSNDHVLV…KNLLGNPQAS (395 aa)) are cytoplasmic. The 238-residue stretch at 48–285 (VKSGFLVRKT…FASAGYHCEP (238 aa)) folds into the ABC transporter domain. ATP contacts are provided by residues 79-86 (GPTGGGKS), 183-189 (RGISGGE), Glu210, and His242. The region spanning 389-653 (LGNPQASVAQ…TIAYLKLLFL (265 aa)) is the ABC transmembrane type-2 domain. A helical transmembrane segment spans residues 396–416 (VAQLIVTVILGLIIGALYFGL). At 417–428 (KNDPTGMQNRAG) the chain is on the extracellular side. The chain crosses the membrane as a helical span at residues 429 to 449 (VFFFLTTNQCFTSVSAVELFV). The Cytoplasmic segment spans residues 450–477 (VEKKLFIHEYISGYYRVSSYFFGKLVSD). The helical transmembrane segment at 478 to 498 (LLPMRFLPSVIYTCILYFMLG) threads the bilayer. Residues 499–506 (LKRTVEAF) are Extracellular-facing. Residues 507-527 (FIMMFTLIMVAYTASSMALAI) form a helical membrane-spanning segment. Topologically, residues 528 to 535 (AAGQSVVS) are cytoplasmic. Residues 536-556 (VATLLMTISFVFMMLFSGLLV) traverse the membrane as a helical segment. The Extracellular segment spans residues 557–632 (NLRTIGPWLS…LSPWGLWRNH (76 aa)). Cys592 and Cys610 form a disulfide bridge. 2 N-linked (GlcNAc...) asparagine glycosylation sites follow: Asn596 and Asn600. Residues 633–653 (VALACMIIIFLTIAYLKLLFL) form a helical membrane-spanning segment. At 654–657 (KKYS) the chain is on the cytoplasmic side.

The protein belongs to the ABC transporter superfamily. ABCG family. Eye pigment precursor importer (TC 3.A.1.204) subfamily. As to quaternary structure, homodimer; disulfide-linked. The minimal functional unit is a homodimer, but the major oligomeric form in plasma membrane is a homotetramer with possibility of higher order oligomerization up to homododecamers. Post-translationally, N-glycosylated in brain capillary, kidney and small intestine but not in heart. In terms of processing, N-glycosylated. Glycosylation-deficient ABCG2 is normally expressed and functional. Phosphorylated. Phosphorylation may regulate the localization to the plasma membrane, the homooligomerization and therefore, the activity of the transporter. In terms of tissue distribution, highly expressed in brain capillary, kidney and small intestine. Lower expression in heart. Preferentially expressed (at protein level) on the luminal membrane of brain capillaries, in kidney and small intestine.

It localises to the cell membrane. Its subcellular location is the apical cell membrane. The protein resides in the mitochondrion membrane. The catalysed reaction is ATP + H2O + xenobioticSide 1 = ADP + phosphate + xenobioticSide 2.. It catalyses the reaction urate(in) + ATP + H2O = urate(out) + ADP + phosphate + H(+). It carries out the reaction indoxyl sulfate(in) + ATP + H2O = indoxyl sulfate(out) + ADP + phosphate + H(+). The enzyme catalyses sphing-4-enine 1-phosphate(in) + ATP + H2O = sphing-4-enine 1-phosphate(out) + ADP + phosphate + H(+). The catalysed reaction is estrone 3-sulfate(in) + ATP + H2O = estrone 3-sulfate(out) + ADP + phosphate + H(+). It catalyses the reaction dehydroepiandrosterone 3-sulfate(in) + ATP + H2O = dehydroepiandrosterone 3-sulfate(out) + ADP + phosphate + H(+). It carries out the reaction 4-methylumbelliferone sulfate(in) + ATP + H2O = 4-methylumbelliferone sulfate(out) + ADP + phosphate + H(+). The enzyme catalyses 5,7-dimethyl-2-methylamino-4-(3-pyridylmethyl)-1,3-benzothiazol-6-yl beta-D-glucuronate(in) + ATP + H2O = 5,7-dimethyl-2-methylamino-4-(3-pyridylmethyl)-1,3-benzothiazol-6-yl beta-D-glucuronate(out) + ADP + phosphate + H(+). The catalysed reaction is 4-methylumbelliferone beta-D-glucuronate(in) + ATP + H2O = 4-methylumbelliferone beta-D-glucuronate(out) + ADP + phosphate + H(+). It catalyses the reaction 5,7-dimethyl-2-methylamino-4-(3-pyridylmethyl)-1,3-benzothiazol-6-yl sulfate(in) + ATP + H2O = 5,7-dimethyl-2-methylamino-4-(3-pyridylmethyl)-1,3-benzothiazol-6-yl sulfate(out) + ADP + phosphate + H(+). It carries out the reaction 17beta-estradiol 17-O-(beta-D-glucuronate)(in) + ATP + H2O = 17beta-estradiol 17-O-(beta-D-glucuronate)(out) + ADP + phosphate + H(+). The enzyme catalyses methotrexate(in) + ATP + H2O = methotrexate(out) + ADP + phosphate + H(+). The catalysed reaction is riboflavin(in) + ATP + H2O = riboflavin(out) + ADP + phosphate + H(+). It catalyses the reaction pheophorbide a(in) + ATP + H2O = pheophorbide a(out) + ADP + phosphate + H(+). It carries out the reaction itaconate(in) + ATP + H2O = itaconate(out) + ADP + phosphate + H(+). In terms of biological role, broad substrate specificity ATP-dependent transporter of the ATP-binding cassette (ABC) family that actively extrudes a wide variety of physiological compounds, dietary toxins and xenobiotics from cells. Involved in porphyrin homeostasis, mediating the export of protoporphyrin IX (PPIX) from both mitochondria to cytosol and cytosol to extracellular space, it also functions in the cellular export of heme. Also mediates the efflux of sphingosine-1-P from cells. Acts as a urate exporter functioning in both renal and extrarenal urate excretion. In kidney, it also functions as a physiological exporter of the uremic toxin indoxyl sulfate. Also involved in the excretion of steroids like estrone 3-sulfate/E1S, 3beta-sulfooxy-androst-5-en-17-one/DHEAS, and other sulfate conjugates. Mediates the secretion of the riboflavin and biotin vitamins into milk. Extrudes pheophorbide a, a phototoxic porphyrin catabolite of chlorophyll, reducing its bioavailability. Plays an important role in the exclusion of xenobiotics from the brain. It confers to cells a resistance to multiple drugs and other xenobiotics including mitoxantrone, pheophorbide, camptothecin, methotrexate, azidothymidine, and the anthracyclines daunorubicin and doxorubicin, through the control of their efflux. In placenta, it limits the penetration of drugs from the maternal plasma into the fetus. May play a role in early stem cell self-renewal by blocking differentiation. In inflammatory macrophages, exports itaconate from the cytosol to the extracellular compartment and limits the activation of TFEB-dependent lysosome biogenesis involved in antibacterial innate immune response. This chain is Broad substrate specificity ATP-binding cassette transporter ABCG2 (Abcg2), found in Rattus norvegicus (Rat).